Here is a 147-residue protein sequence, read N- to C-terminus: Large ribosomal subunit protein bL9 (147 aa).

It belongs to the bacterial ribosomal protein bL9 family.

Its function is as follows. Binds to the 23S rRNA. The protein is Large ribosomal subunit protein bL9 of Campylobacter hominis (strain ATCC BAA-381 / DSM 21671 / CCUG 45161 / LMG 19568 / NCTC 13146 / CH001A).